A 490-amino-acid chain; its full sequence is Protein nucleotidyltransferase YdiU (490 aa).

8 residues coordinate ATP: Gly94, Gly96, Arg97, Lys117, Asp129, Gly130, Arg180, and Arg187. Asp256 (proton acceptor) is an active-site residue. Residues Asn257 and Asp266 each contribute to the Mg(2+) site. Asp266 contacts ATP.

It belongs to the SELO family. Requires Mg(2+) as cofactor. Mn(2+) is required as a cofactor.

The enzyme catalyses L-seryl-[protein] + ATP = 3-O-(5'-adenylyl)-L-seryl-[protein] + diphosphate. It carries out the reaction L-threonyl-[protein] + ATP = 3-O-(5'-adenylyl)-L-threonyl-[protein] + diphosphate. It catalyses the reaction L-tyrosyl-[protein] + ATP = O-(5'-adenylyl)-L-tyrosyl-[protein] + diphosphate. The catalysed reaction is L-histidyl-[protein] + UTP = N(tele)-(5'-uridylyl)-L-histidyl-[protein] + diphosphate. The enzyme catalyses L-seryl-[protein] + UTP = O-(5'-uridylyl)-L-seryl-[protein] + diphosphate. It carries out the reaction L-tyrosyl-[protein] + UTP = O-(5'-uridylyl)-L-tyrosyl-[protein] + diphosphate. In terms of biological role, nucleotidyltransferase involved in the post-translational modification of proteins. It can catalyze the addition of adenosine monophosphate (AMP) or uridine monophosphate (UMP) to a protein, resulting in modifications known as AMPylation and UMPylation. In Clostridium perfringens (strain SM101 / Type A), this protein is Protein nucleotidyltransferase YdiU.